The sequence spans 135 residues: Ribosome-binding factor A (135 aa).

It belongs to the RbfA family. Monomer. Binds 30S ribosomal subunits, but not 50S ribosomal subunits or 70S ribosomes.

It localises to the cytoplasm. Functionally, one of several proteins that assist in the late maturation steps of the functional core of the 30S ribosomal subunit. Associates with free 30S ribosomal subunits (but not with 30S subunits that are part of 70S ribosomes or polysomes). Required for efficient processing of 16S rRNA. May interact with the 5'-terminal helix region of 16S rRNA. The sequence is that of Ribosome-binding factor A from Sinorhizobium fredii (strain NBRC 101917 / NGR234).